The chain runs to 569 residues: Methionine--tRNA ligase (569 aa).

Residues 11 to 21 (PYINGVKHLGN) carry the 'HIGH' region motif. The Zn(2+) site is built by cysteine 143, cysteine 146, cysteine 156, and cysteine 159. The 'KMSKS' region motif lies at 342–346 (KFSTS). Threonine 345 contacts ATP.

Belongs to the class-I aminoacyl-tRNA synthetase family. MetG type 1 subfamily. In terms of assembly, monomer. It depends on Zn(2+) as a cofactor.

The protein resides in the cytoplasm. It carries out the reaction tRNA(Met) + L-methionine + ATP = L-methionyl-tRNA(Met) + AMP + diphosphate. In terms of biological role, is required not only for elongation of protein synthesis but also for the initiation of all mRNA translation through initiator tRNA(fMet) aminoacylation. This is Methionine--tRNA ligase from Caulobacter sp. (strain K31).